The chain runs to 81 residues: Small ribosomal subunit protein bS20 (81 aa).

The span at 1-11 (MPNIKSQKKRV) shows a compositional bias: basic residues. The tract at residues 1-20 (MPNIKSQKKRVLTNEKSRAS) is disordered.

It belongs to the bacterial ribosomal protein bS20 family.

Binds directly to 16S ribosomal RNA. This Mesoplasma florum (strain ATCC 33453 / NBRC 100688 / NCTC 11704 / L1) (Acholeplasma florum) protein is Small ribosomal subunit protein bS20.